The chain runs to 446 residues: tRNA modification GTPase MnmE (446 aa).

Residues arginine 24, glutamate 81, and lysine 120 each coordinate (6S)-5-formyl-5,6,7,8-tetrahydrofolate. In terms of domain architecture, TrmE-type G spans 216-368 (GLHAVLIGPP…LHIRLRELAL (153 aa)). K(+) is bound at residue asparagine 226. Residues 226-231 (NAGKSS), 245-251 (TDVAGTT), and 270-273 (DTAG) each bind GTP. Position 230 (serine 230) interacts with Mg(2+). 3 residues coordinate K(+): threonine 245, valine 247, and threonine 250. Threonine 251 is a Mg(2+) binding site. Lysine 446 contacts (6S)-5-formyl-5,6,7,8-tetrahydrofolate.

It belongs to the TRAFAC class TrmE-Era-EngA-EngB-Septin-like GTPase superfamily. TrmE GTPase family. As to quaternary structure, homodimer. Heterotetramer of two MnmE and two MnmG subunits. The cofactor is K(+).

Its subcellular location is the cytoplasm. Its function is as follows. Exhibits a very high intrinsic GTPase hydrolysis rate. Involved in the addition of a carboxymethylaminomethyl (cmnm) group at the wobble position (U34) of certain tRNAs, forming tRNA-cmnm(5)s(2)U34. The protein is tRNA modification GTPase MnmE of Xanthomonas oryzae pv. oryzae (strain MAFF 311018).